The chain runs to 424 residues: Serpin E3 (424 aa).

Residues 1–20 (MPPFLITLFLFHSCCLRANG) form the signal peptide. A glycan (N-linked (GlcNAc...) asparagine) is linked at Asn-46. Residues 143-174 (DLSEPNSTAIQTSEGASRETAGGGPSEGPGGW) form a disordered region. Over residues 146 to 157 (EPNSTAIQTSEG) the composition is skewed to polar residues. Gly residues predominate over residues 163 to 173 (AGGGPSEGPGG).

It belongs to the serpin family.

The protein localises to the secreted. In terms of biological role, probable serine protease inhibitor. This chain is Serpin E3 (SERPINE3), found in Homo sapiens (Human).